The following is a 176-amino-acid chain: Protein MOTHER of FT and TFL1 homolog 1 (176 aa).

Belongs to the phosphatidylethanolamine-binding protein family.

Its function is as follows. May form complexes with phosphorylated ligands by interfering with kinases and their effectors. The sequence is that of Protein MOTHER of FT and TFL1 homolog 1 from Oryza sativa subsp. japonica (Rice).